The chain runs to 858 residues: Heat shock protein 105 kDa (858 aa).

Residue S2 is modified to N-acetylserine. An N6-acetyllysine modification is found at K471. 2 disordered regions span residues 500–584 and 796–858; these read KVPT…PPEA and CEPV…MDLD. Acidic residues predominate over residues 504 to 514; that stretch reads EENEMSSEADM. A phosphoserine mark is found at S509 and S510. The segment covering 532-554 has biased composition (polar residues); the sequence is QQDNSEAGTQPQVQTDAQQTSQS. Position 557 is a phosphoserine (S557). T561 is modified (phosphothreonine). 2 stretches are compositionally biased toward basic and acidic residues: residues 563-584 and 805-814; these read EENK…PPEA and PKIESPKLER. S809 carries the phosphoserine modification. The residue at position 815 (T815) is a Phosphothreonine. Basic and acidic residues predominate over residues 821–832; the sequence is IDKKEEDLEDKN. Polar residues predominate over residues 849–858; the sequence is EKNSVNMDLD.

This sequence belongs to the heat shock protein 70 family. As to quaternary structure, interacts with HSPA8/HSC70. Interacts with HSPA1A (via NBD) and HSPA1B (via NBD). In terms of processing, phosphorylation on Ser-509 may be important for regulation of the HSPA8/HSC70 chaperone activity. In terms of tissue distribution, highly expressed in testis. Present at lower levels in most brain regions, except cerebellum. Overexpressed in cancer cells.

It is found in the cytoplasm. Functionally, acts as a nucleotide-exchange factor (NEF) for chaperone proteins HSPA1A and HSPA1B, promoting the release of ADP from HSPA1A/B thereby triggering client/substrate protein release. Prevents the aggregation of denatured proteins in cells under severe stress, on which the ATP levels decrease markedly. Inhibits HSPA8/HSC70 ATPase and chaperone activities. The chain is Heat shock protein 105 kDa (HSPH1) from Homo sapiens (Human).